The sequence spans 219 residues: Ribose-5-phosphate isomerase A (219 aa).

Residues 28–31 (TGST), 81–84 (DGAD), and 94–97 (KGGG) each bind substrate. Glu103 acts as the Proton acceptor in catalysis. A substrate-binding site is contributed by Lys121.

It belongs to the ribose 5-phosphate isomerase family. Homodimer.

The catalysed reaction is aldehydo-D-ribose 5-phosphate = D-ribulose 5-phosphate. Its pathway is carbohydrate degradation; pentose phosphate pathway; D-ribose 5-phosphate from D-ribulose 5-phosphate (non-oxidative stage): step 1/1. In terms of biological role, catalyzes the reversible conversion of ribose-5-phosphate to ribulose 5-phosphate. The sequence is that of Ribose-5-phosphate isomerase A from Shewanella sp. (strain MR-4).